The chain runs to 106 residues: Replication restart protein PriB (106 aa).

The SSB domain occupies 4–103 (TNRLVLSGTV…LHAEQIEFID (100 aa)).

Belongs to the PriB family. As to quaternary structure, homodimer. Interacts with PriA and DnaT. Component of the replication restart primosome. Primosome assembly occurs via a 'hand-off' mechanism. PriA binds to replication forks, subsequently PriB then DnaT bind; DnaT then displaces ssDNA to generate the helicase loading substrate.

In terms of biological role, involved in the restart of stalled replication forks, which reloads the replicative helicase on sites other than the origin of replication; the PriA-PriB pathway is the major replication restart pathway. During primosome assembly it facilitates complex formation between PriA and DnaT on DNA; stabilizes PriA on DNA. Stimulates the DNA unwinding activity of PriA helicase. The chain is Replication restart protein PriB from Yersinia pestis.